A 220-amino-acid chain; its full sequence is Deoxyribose-phosphate aldolase (220 aa).

Catalysis depends on Asp-89, which acts as the Proton donor/acceptor. Lys-151 functions as the Schiff-base intermediate with acetaldehyde in the catalytic mechanism. The active-site Proton donor/acceptor is the Lys-180.

It belongs to the DeoC/FbaB aldolase family. DeoC type 1 subfamily.

Its subcellular location is the cytoplasm. It carries out the reaction 2-deoxy-D-ribose 5-phosphate = D-glyceraldehyde 3-phosphate + acetaldehyde. Its pathway is carbohydrate degradation; 2-deoxy-D-ribose 1-phosphate degradation; D-glyceraldehyde 3-phosphate and acetaldehyde from 2-deoxy-alpha-D-ribose 1-phosphate: step 2/2. In terms of biological role, catalyzes a reversible aldol reaction between acetaldehyde and D-glyceraldehyde 3-phosphate to generate 2-deoxy-D-ribose 5-phosphate. This is Deoxyribose-phosphate aldolase from Thermus thermophilus (strain ATCC BAA-163 / DSM 7039 / HB27).